A 320-amino-acid chain; its full sequence is Short-chain dehydrogenase/reductase ATR7 (320 aa).

9 residues coordinate NADP(+): Ser32, Ile34, Gln55, Asp70, Asn93, Lys134, Tyr167, Lys171, and Thr202. Tyr167 acts as the Proton acceptor in catalysis. Lys171 functions as the Lowers pKa of active site Tyr in the catalytic mechanism.

The protein belongs to the short-chain dehydrogenases/reductases (SDR) family.

Its pathway is mycotoxin biosynthesis. Short-chain dehydrogenase/reductase; part of the core atranone cluster (CAC) which products are predicted to catalyze most or all steps of mycotoxin atranone synthesis, starting from geranylgeranyl pyrophosphate (GGPP). The initial cyclization of GGPP to dolabellane is probably performed by the terpene cyclase ATR13. The Baeyer-Villiger oxidation near the end of the atranone synthesis, which converts atranones D and E to atranones F and G is predicted to be catalyzed by the monooxygenase ATR8. Of the CAC's other predicted gene products, the reducing PKS ATR6 might synthesize a polyketide chain. This polyketide is probably transferred onto the atranone backbone by the polyketide transferase ATR5. Other predicted CAC products include 4 oxygenases (ATR2, ATR3, ATR4, and ATR14), 3 short-chain reductases (ATR7, ATR9, and ATR10), and a methyltransferase (ATR12). These may all be involved in the various steps of atranone biosynthesis, although their specific roles must await experimental determination. This Stachybotrys chlorohalonatus (strain IBT 40285) protein is Short-chain dehydrogenase/reductase ATR7.